The primary structure comprises 451 residues: 2-succinylbenzoate--CoA ligase (451 aa).

This sequence belongs to the ATP-dependent AMP-binding enzyme family. MenE subfamily.

It catalyses the reaction 2-succinylbenzoate + ATP + CoA = 2-succinylbenzoyl-CoA + AMP + diphosphate. It participates in quinol/quinone metabolism; 1,4-dihydroxy-2-naphthoate biosynthesis; 1,4-dihydroxy-2-naphthoate from chorismate: step 5/7. The protein operates within quinol/quinone metabolism; menaquinone biosynthesis. Functionally, converts 2-succinylbenzoate (OSB) to 2-succinylbenzoyl-CoA (OSB-CoA). This is 2-succinylbenzoate--CoA ligase from Lactococcus lactis subsp. lactis (strain IL1403) (Streptococcus lactis).